The sequence spans 639 residues: UvrABC system protein C (639 aa).

The GIY-YIG domain occupies 20 to 97 (ERSGVYRMFD…IKKFQPKFNI (78 aa)). The region spanning 207–242 (KELQENLSRKMEELSSQMRFEEAAEIRDRIKALSYV) is the UVR domain.

This sequence belongs to the UvrC family. As to quaternary structure, interacts with UvrB in an incision complex.

The protein resides in the cytoplasm. Its function is as follows. The UvrABC repair system catalyzes the recognition and processing of DNA lesions. UvrC both incises the 5' and 3' sides of the lesion. The N-terminal half is responsible for the 3' incision and the C-terminal half is responsible for the 5' incision. The polypeptide is UvrABC system protein C (Rickettsia conorii (strain ATCC VR-613 / Malish 7)).